A 265-amino-acid chain; its full sequence is Undecaprenyl-diphosphatase (265 aa).

A run of 7 helical transmembrane segments spans residues 38–58 (SDMF…IIYW), 80–100 (LIVA…LGFE), 107–127 (PIAW…WAAA), 135–155 (ITWL…VFPG), 175–195 (AAAT…ASGY), 213–233 (ALAI…KWLL), and 244–264 (FAIY…SGLI).

This sequence belongs to the UppP family.

The protein localises to the cell inner membrane. The catalysed reaction is di-trans,octa-cis-undecaprenyl diphosphate + H2O = di-trans,octa-cis-undecaprenyl phosphate + phosphate + H(+). Catalyzes the dephosphorylation of undecaprenyl diphosphate (UPP). Confers resistance to bacitracin. The sequence is that of Undecaprenyl-diphosphatase from Rhizobium etli (strain CIAT 652).